A 186-amino-acid polypeptide reads, in one-letter code: Elongation factor P (186 aa).

The protein belongs to the elongation factor P family.

The protein localises to the cytoplasm. The protein operates within protein biosynthesis; polypeptide chain elongation. Functionally, involved in peptide bond synthesis. Stimulates efficient translation and peptide-bond synthesis on native or reconstituted 70S ribosomes in vitro. Probably functions indirectly by altering the affinity of the ribosome for aminoacyl-tRNA, thus increasing their reactivity as acceptors for peptidyl transferase. This Streptococcus mutans serotype c (strain ATCC 700610 / UA159) protein is Elongation factor P.